The sequence spans 243 residues: 3-deoxy-manno-octulosonate cytidylyltransferase (243 aa).

It belongs to the KdsB family.

The protein localises to the cytoplasm. It carries out the reaction 3-deoxy-alpha-D-manno-oct-2-ulosonate + CTP = CMP-3-deoxy-beta-D-manno-octulosonate + diphosphate. It participates in nucleotide-sugar biosynthesis; CMP-3-deoxy-D-manno-octulosonate biosynthesis; CMP-3-deoxy-D-manno-octulosonate from 3-deoxy-D-manno-octulosonate and CTP: step 1/1. Its pathway is bacterial outer membrane biogenesis; lipopolysaccharide biosynthesis. Activates KDO (a required 8-carbon sugar) for incorporation into bacterial lipopolysaccharide in Gram-negative bacteria. In Bartonella tribocorum (strain CIP 105476 / IBS 506), this protein is 3-deoxy-manno-octulosonate cytidylyltransferase.